Reading from the N-terminus, the 378-residue chain is Spermidine/putrescine import ATP-binding protein PotA (378 aa).

One can recognise an ABC transporter domain in the interval 18-248 (VQLAGIRKCF…PKNLFVAGFI (231 aa)). Residue 50–57 (GPSGCGKT) coordinates ATP.

Belongs to the ABC transporter superfamily. Spermidine/putrescine importer (TC 3.A.1.11.1) family. The complex is composed of two ATP-binding proteins (PotA), two transmembrane proteins (PotB and PotC) and a solute-binding protein (PotD).

The protein resides in the cell inner membrane. The enzyme catalyses ATP + H2O + polyamine-[polyamine-binding protein]Side 1 = ADP + phosphate + polyamineSide 2 + [polyamine-binding protein]Side 1.. Part of the ABC transporter complex PotABCD involved in spermidine/putrescine import. Responsible for energy coupling to the transport system. The protein is Spermidine/putrescine import ATP-binding protein PotA of Shigella flexneri.